We begin with the raw amino-acid sequence, 683 residues long: DNA ligase (683 aa).

Residues 43 to 47 (DAEYD), 92 to 93 (SL), and E125 each bind NAD(+). K127 functions as the N6-AMP-lysine intermediate in the catalytic mechanism. Residues R148, E185, K303, and K327 each coordinate NAD(+). Residues C421, C424, C439, and C445 each coordinate Zn(2+). The BRCT domain occupies 604-683 (IADNPLKGKN…QEFIALTGEN (80 aa)).

It belongs to the NAD-dependent DNA ligase family. LigA subfamily. It depends on Mg(2+) as a cofactor. The cofactor is Mn(2+).

The catalysed reaction is NAD(+) + (deoxyribonucleotide)n-3'-hydroxyl + 5'-phospho-(deoxyribonucleotide)m = (deoxyribonucleotide)n+m + AMP + beta-nicotinamide D-nucleotide.. Functionally, DNA ligase that catalyzes the formation of phosphodiester linkages between 5'-phosphoryl and 3'-hydroxyl groups in double-stranded DNA using NAD as a coenzyme and as the energy source for the reaction. It is essential for DNA replication and repair of damaged DNA. The chain is DNA ligase from Actinobacillus pleuropneumoniae serotype 5b (strain L20).